The following is a 583-amino-acid chain: Sensor protein SrrB (583 aa).

Topologically, residues 1-11 (MMSRLNSVVIK) are cytoplasmic. Residues 12 to 32 (LWLTIILIVTTVLILLSIALI) traverse the membrane as a helical segment. At 33 to 174 (TFMQYYFTQE…SIEDTNNAIT (142 aa)) the chain is on the extracellular side. The chain crosses the membrane as a helical span at residues 175 to 195 (IITIITAVIFLTITTVFAFFL). Residues 196-583 (SSRITKPLRR…TFIIKLPKPE (388 aa)) lie on the Cytoplasmic side of the membrane. The region spanning 197-249 (SRITKPLRRLRDQATRVSEGDYSYKPSVTTKDEIGQLSQAFNQMSTEIEEHVD) is the HAMP domain. The 218-residue stretch at 366 to 583 (NVSHELRTPI…TFIIKLPKPE (218 aa)) folds into the Histidine kinase domain. Position 369 is a phosphohistidine; by autocatalysis (His-369).

The protein localises to the cell membrane. It catalyses the reaction ATP + protein L-histidine = ADP + protein N-phospho-L-histidine.. In terms of biological role, member of the two-component regulatory system SrrA/SrrB, which is involved in the global regulation of staphylococcal virulence factors in response to environmental oxygen levels as well as biofilm formation. Also plays an essential role in host-derived nitric oxide resistance by regulating hmp/flavohemoglobin, an enzyme that detoxifies nitric oxide by converting it to nitrate. Functions as a sensor protein kinase which is autophosphorylated at a histidine residue and transfers its phosphate group to SrrA. In turn, SrrA binds to the upstream promoter regions of the target genes to positively and negatively regulate their expression. The polypeptide is Sensor protein SrrB (srrB) (Staphylococcus aureus (strain MRSA252)).